We begin with the raw amino-acid sequence, 121 residues long: Ribonuclease P protein component 4 (121 aa).

Zn(2+) contacts are provided by Cys63, Cys66, Cys89, and Cys92.

Belongs to the eukaryotic/archaeal RNase P protein component 4 family. In terms of assembly, consists of a catalytic RNA component and at least 4-5 protein subunits. It depends on Zn(2+) as a cofactor.

It localises to the cytoplasm. The catalysed reaction is Endonucleolytic cleavage of RNA, removing 5'-extranucleotides from tRNA precursor.. Functionally, part of ribonuclease P, a protein complex that generates mature tRNA molecules by cleaving their 5'-ends. The protein is Ribonuclease P protein component 4 of Methanobrevibacter smithii (strain ATCC 35061 / DSM 861 / OCM 144 / PS).